We begin with the raw amino-acid sequence, 160 residues long: Ribosomal RNA large subunit methyltransferase H (160 aa).

S-adenosyl-L-methionine-binding positions include Leu77, Gly109, and 128-133; that span reads FSRLTF.

The protein belongs to the RNA methyltransferase RlmH family. In terms of assembly, homodimer.

It localises to the cytoplasm. The enzyme catalyses pseudouridine(1915) in 23S rRNA + S-adenosyl-L-methionine = N(3)-methylpseudouridine(1915) in 23S rRNA + S-adenosyl-L-homocysteine + H(+). Functionally, specifically methylates the pseudouridine at position 1915 (m3Psi1915) in 23S rRNA. The chain is Ribosomal RNA large subunit methyltransferase H from Desulfitobacterium hafniense (strain DSM 10664 / DCB-2).